We begin with the raw amino-acid sequence, 208 residues long: Putative RING finger protein 413R (208 aa).

A disordered region spans residues 1 to 87 (MDAIFYPLPI…RHWSDDDSDR (87 aa)). Residues 22–71 (DFQEEDFQEEDFQEEDFQEEDFQEEDEDEEDEEVNEYPSDLDDEYPDSDY) are compositionally biased toward acidic residues. Over residues 72 to 82 (YDERSDRHWSD) the composition is skewed to basic and acidic residues. Residues 83–147 (DDSDRDLDDL…KLTTLSKNLT (65 aa)) are a coiled coil. The RING-type zinc-finger motif lies at 148 to 196 (CIICLTNQVQILTIPCGHLIMCNPCSLNLNNSVCTRGVNSNYEKCPKCR).

The chain is Putative RING finger protein 413R (EF2) from Acheta domesticus (House cricket).